We begin with the raw amino-acid sequence, 85 residues long: MRLCVCSAVDWTTHRSSAGEFCGCQLRTPKEQYLSVNLSGTRTARDYDASGKRWRPLAVLTRRWGKAIHLTVDRVAESLRRLACR.

This is an uncharacterized protein from Mycobacterium tuberculosis (strain CDC 1551 / Oshkosh).